Reading from the N-terminus, the 509-residue chain is uncharacterized protein (509 aa).

Disordered regions lie at residues 112-131 (KSKQNNNGFNGHKGNFSENE), 152-325 (NKNT…NNDS), 365-457 (NNIN…PNQG), and 488-509 (AQQPVSQQNNNVETNQDNVQQQ). Low complexity-rich tracts occupy residues 116-127 (NNNGFNGHKGNF) and 153-184 (KNTIITRKNNNNNNSNNNNNNNNNYNQKSNTT). The segment covering 189–217 (YSDDDYQNEQNEFEEEDYDSNDDENDSHD) has biased composition (acidic residues). A compositionally biased stretch (polar residues) spans 228–242 (KTTNQLKRKVSSSFT). Composition is skewed to low complexity over residues 243-325 (NNNY…NNDS) and 365-397 (NNINANNNNNNNNNNNNNNNLNDSTPNNQTNND). The segment covering 398–422 (LKSSNHSNYDFNYNTNERLSHSPIQ) has biased composition (polar residues). Residues 423–442 (THSSSNNSTPSNQSPTFPSN) show a composition bias toward low complexity. Composition is skewed to polar residues over residues 443 to 457 (YISQNANINYNPNQG) and 496 to 509 (NNNVETNQDNVQQQ).

This is an uncharacterized protein from Dictyostelium discoideum (Social amoeba).